Here is a 284-residue protein sequence, read N- to C-terminus: Shikimate dehydrogenase (NADP(+)) (284 aa).

Residues 20–22 (SIS) and serine 67 each bind shikimate. Catalysis depends on lysine 71, which acts as the Proton acceptor. Aspartate 83 serves as a coordination point for NADP(+). Positions 92 and 107 each coordinate shikimate. Residues 129–133 (GAGGA) and isoleucine 227 each bind NADP(+). Tyrosine 229 provides a ligand contact to shikimate. Glycine 250 provides a ligand contact to NADP(+).

Belongs to the shikimate dehydrogenase family. As to quaternary structure, homodimer.

The catalysed reaction is shikimate + NADP(+) = 3-dehydroshikimate + NADPH + H(+). The protein operates within metabolic intermediate biosynthesis; chorismate biosynthesis; chorismate from D-erythrose 4-phosphate and phosphoenolpyruvate: step 4/7. In terms of biological role, involved in the biosynthesis of the chorismate, which leads to the biosynthesis of aromatic amino acids. Catalyzes the reversible NADPH linked reduction of 3-dehydroshikimate (DHSA) to yield shikimate (SA). This chain is Shikimate dehydrogenase (NADP(+)), found in Streptococcus pneumoniae (strain JJA).